The following is a 1286-amino-acid chain: CLIP-associating protein 2 (1286 aa).

Positions 1–40 (MRRLICKRICDYKSFDDEESVDGNRPSSAASAFKVPAPKT) are golgi localization. Serine 14 and serine 20 each carry phosphoserine. A disordered region spans residues 17-70 (DEESVDGNRPSSAASAFKVPAPKTPGNPVNSARKPGSAGGPKAGGTSKEGGAGA). The segment covering 53 to 69 (SAGGPKAGGTSKEGGAG) has biased composition (gly residues). A TOG 1 region spans residues 66–317 (GGAGAVDEDD…KSLQTYLKSS (252 aa)). 3 HEAT repeats span residues 179–214 (HGAE…IRHT), 215–251 (HVPR…EWQT), and 256–293 (RHAA…HFPG). Disordered regions lie at residues 320 to 350 (VASL…TANP) and 355 to 374 (GRVS…LQRS). 3 positions are modified to phosphoserine: serine 322, serine 333, and serine 336. Residues 322–340 (SLPQSDRSSSSSQESLNRP) show a composition bias toward low complexity. The segment covering 341–350 (FSSKWSTANP) has biased composition (polar residues). 3 positions are modified to phosphoserine: serine 374, serine 376, and serine 413. Positions 410-473 (SYASLEDTSD…GSRSGSPGRV (64 aa)) are disordered. Over residues 417–431 (TSDKMDGTASEDGRV) the composition is skewed to basic and acidic residues. The interval 450–565 (RGRSRTKMVS…GPGYGMSQSS (116 aa)) is interaction with microtubules, MAPRE1 and MAPRE3. Positions 459-473 (SQSQPGSRSGSPGRV) are enriched in low complexity. Phosphoserine is present on residues serine 461, serine 465, serine 469, serine 484, and serine 495. The tract at residues 492 to 566 (NSASAQKRSK…PGYGMSQSSR (75 aa)) is disordered. Residues 500 to 503 (SKIP) carry the SXIP motif 1; mediates interaction with MAPRE1 and targeting to microtubule plus ends motif. A Phosphoserine modification is found at serine 513. The SXIP motif 2; mediates interaction with MAPRE1 and targeting to microtubule plus ends motif lies at 523-526 (SRIP). Phosphoserine occurs at positions 531, 535, 570, 572, 581, 614, and 620. Residues 606–616 (RYESYGMHSDD) show a composition bias toward basic and acidic residues. A disordered region spans residues 606-638 (RYESYGMHSDDDANSDASSACSERSYSSRNGSI). Low complexity predominate over residues 620–634 (SDASSACSERSYSSR). Positions 642-873 (MRQTEDVAEV…TKLLHNHLRN (232 aa)) are TOG 2. 2 HEAT repeats span residues 702–739 (KVFS…KMGA) and 764–801 (LQFN…QMDP). Threonine 779 is subject to Phosphothreonine. Residues 864-1286 (TKLLHNHLRN…DPTTDVSGQS (423 aa)) form an interaction with RSN and localization to the Golgi and kinetochores region. Disordered stretches follow at residues 870–920 (HLRN…FDYD) and 944–990 (SFRS…QPAL). Composition is skewed to polar residues over residues 872-884 (RNTG…SMGS) and 893-914 (SPAN…TLSP). Position 884 is a phosphoserine (serine 884). A phosphoserine mark is found at serine 944, serine 947, serine 1005, and serine 1021. The span at 947–964 (SQEDMSEPLKRDPKKEDG) shows a compositional bias: basic and acidic residues. Positions 1009-1286 (RDYNPYNYSD…DPTTDVSGQS (278 aa)) are required for cortical localization. HEAT repeat units follow at residues 1046–1083 (LDHS…TQEE), 1090–1127 (EHFK…HQPA), and 1208–1245 (LLLP…VIGD).

The protein belongs to the CLASP family. Interacts with microtubules. Interacts with MAPRE1; probably required for targeting to the growing microtubule plus ends. Interacts with CLIP2, ERC1, MAPRE3, PHLDB2 and RSN. The interaction with ERC1 may be mediated by PHLDB2. Interacts with GCC2; recruits CLASP2 to Golgi membranes. Interacts with MACF1. Interacts with SOGA1 and MTCL1. Phosphorylated by GSK3B. Phosphorylation by GSK3B may negatively regulate binding to microtubule lattices in lamella.

It is found in the cytoplasm. The protein resides in the cytoskeleton. The protein localises to the microtubule organizing center. It localises to the centrosome. Its subcellular location is the chromosome. It is found in the centromere. The protein resides in the kinetochore. The protein localises to the spindle. It localises to the golgi apparatus. Its subcellular location is the trans-Golgi network. It is found in the cell membrane. The protein resides in the cell projection. The protein localises to the ruffle membrane. It localises to the cell cortex. Its function is as follows. Microtubule plus-end tracking protein that promotes the stabilization of dynamic microtubules. Involved in the nucleation of noncentrosomal microtubules originating from the trans-Golgi network (TGN). Required for the polarization of the cytoplasmic microtubule arrays in migrating cells towards the leading edge of the cell. May act at the cell cortex to enhance the frequency of rescue of depolymerizing microtubules by attaching their plus-ends to cortical platforms composed of ERC1 and PHLDB2. This cortical microtubule stabilizing activity is regulated at least in part by phosphatidylinositol 3-kinase signaling. Also performs a similar stabilizing function at the kinetochore which is essential for the bipolar alignment of chromosomes on the mitotic spindle. Acts as a mediator of ERBB2-dependent stabilization of microtubules at the cell cortex. The sequence is that of CLIP-associating protein 2 (Clasp2) from Rattus norvegicus (Rat).